The sequence spans 340 residues: RNA 3'-terminal phosphate cyclase (340 aa).

Residues Gln-102 and 284–288 contribute to the ATP site; that span reads FLGDQ. His-308 (tele-AMP-histidine intermediate) is an active-site residue.

Belongs to the RNA 3'-terminal cyclase family. Type 1 subfamily.

The protein localises to the cytoplasm. It catalyses the reaction a 3'-end 3'-phospho-ribonucleotide-RNA + ATP = a 3'-end 2',3'-cyclophospho-ribonucleotide-RNA + AMP + diphosphate. Functionally, catalyzes the conversion of 3'-phosphate to a 2',3'-cyclic phosphodiester at the end of RNA. The mechanism of action of the enzyme occurs in 3 steps: (A) adenylation of the enzyme by ATP; (B) transfer of adenylate to an RNA-N3'P to produce RNA-N3'PP5'A; (C) and attack of the adjacent 2'-hydroxyl on the 3'-phosphorus in the diester linkage to produce the cyclic end product. The biological role of this enzyme is unknown but it is likely to function in some aspects of cellular RNA processing. The sequence is that of RNA 3'-terminal phosphate cyclase from Thermococcus onnurineus (strain NA1).